Reading from the N-terminus, the 167-residue chain is Putative defense protein Hdd11-like (167 aa).

A signal peptide spans 1–18 (MMFTYVVAVASVVALTSA). Positions 19–167 (YPTGAPPSAC…ESAPVKVLSH (149 aa)) constitute a Reelin domain. The cysteines at positions 28 and 105 are disulfide-linked.

Belongs to the insect defense protein family. In terms of tissue distribution, in larvae, high expression in the fat body and low expression in midgut, hemocytes and malpighian tubules. No expression in silkgland.

It localises to the secreted. In terms of biological role, may have antimicrobial activity. This Samia ricini (Indian eri silkmoth) protein is Putative defense protein Hdd11-like.